Here is a 212-residue protein sequence, read N- to C-terminus: Peptide methionine sulfoxide reductase MsrA (212 aa).

C51 is a catalytic residue.

Belongs to the MsrA Met sulfoxide reductase family.

The enzyme catalyses L-methionyl-[protein] + [thioredoxin]-disulfide + H2O = L-methionyl-(S)-S-oxide-[protein] + [thioredoxin]-dithiol. The catalysed reaction is [thioredoxin]-disulfide + L-methionine + H2O = L-methionine (S)-S-oxide + [thioredoxin]-dithiol. Has an important function as a repair enzyme for proteins that have been inactivated by oxidation. Catalyzes the reversible oxidation-reduction of methionine sulfoxide in proteins to methionine. The polypeptide is Peptide methionine sulfoxide reductase MsrA (Vibrio parahaemolyticus serotype O3:K6 (strain RIMD 2210633)).